Here is a 366-residue protein sequence, read N- to C-terminus: Methylthioribose-1-phosphate isomerase (366 aa).

Residues 53–55, Arg-90, and Gln-203 contribute to the substrate site; that span reads RGA. Asp-244 serves as the catalytic Proton donor. 254–255 contacts substrate; sequence NK.

It belongs to the eIF-2B alpha/beta/delta subunits family. MtnA subfamily.

The catalysed reaction is 5-(methylsulfanyl)-alpha-D-ribose 1-phosphate = 5-(methylsulfanyl)-D-ribulose 1-phosphate. Its pathway is amino-acid biosynthesis; L-methionine biosynthesis via salvage pathway; L-methionine from S-methyl-5-thio-alpha-D-ribose 1-phosphate: step 1/6. Functionally, catalyzes the interconversion of methylthioribose-1-phosphate (MTR-1-P) into methylthioribulose-1-phosphate (MTRu-1-P). In Methylocella silvestris (strain DSM 15510 / CIP 108128 / LMG 27833 / NCIMB 13906 / BL2), this protein is Methylthioribose-1-phosphate isomerase.